A 522-amino-acid polypeptide reads, in one-letter code: MAAVAAATRWHLLLVLSAAGLGVTGAPQPPNILLLLMDDMGWGDLGVYGEPSRETPNLDRMAAEGMLFPSFYAANPLCSPSRAALLTGRLPIRTGFYTTNGHARNAYTPQEIVGGIPDPEHLLPELLKGAGYASKIVGKWHLGHRPQFHPLKHGFDEWFGSPNCHFGPYDNRARPNIPVYRDWEMVGRFYEEFPINLKTGESNLTQIYLQEALDFIKRQQATHHPFFLYWAIDATHAPVYASRAFLGTSQRGRYGDAVREIDDSVGRIVGLLRDLKIAGNTFVFFTSDNGAALVSAPKQGGSNGPFLCGKQTTFEGGMREPAIAWWPGHIPAGQVSHQLGSVMDLFTTSLSLAGLEPPSDRAIDGLDLLPAMLQGRLTERPIFYYRGNTLMAATLGQYKAHFWTWTNSWEEFRQGVDFCPGQNVSGVTTHSQEEHTKLPLIFHLGRDPGERFPLSFASTEYLDALRKITLVVQQHQESLVPGQPQLNVCNPAVMNWAPPGCEKLGKCLTPPESVPEKCSWPH.

A signal peptide spans 1–25; sequence MAAVAAATRWHLLLVLSAAGLGVTG. The interval 27–379 is catalytic domain; the sequence is PQPPNILLLL…PAMLQGRLTE (353 aa). Ca(2+) contacts are provided by Asp-38, Asp-39, and Cys-78. Cys-78 (nucleophile) is an active-site residue. Cys-78 carries the 3-oxoalanine (Cys) modification. Residue His-141 is part of the active site. N-linked (GlcNAc...) asparagine glycosylation occurs at Asn-203. Ca(2+) contacts are provided by Asp-288 and Asn-289. Cys-308 and Cys-419 form a disulfide bridge. A glycan (N-linked (GlcNAc...) asparagine) is linked at Asn-423. 2 disulfide bridges follow: Cys-489–Cys-518 and Cys-501–Cys-507.

Belongs to the sulfatase family. As to quaternary structure, homodimer. Ca(2+) is required as a cofactor. Post-translationally, the conversion to 3-oxoalanine (also known as C-formylglycine, FGly), of a serine or cysteine residue in prokaryotes and of a cysteine residue in eukaryotes, is critical for catalytic activity.

It is found in the lysosome. The catalysed reaction is Hydrolysis of the 6-sulfate groups of the N-acetyl-D-galactosamine 6-sulfate units of chondroitin sulfate and of the D-galactose 6-sulfate units of keratan sulfate.. The chain is N-acetylgalactosamine-6-sulfatase (GALNS) from Sus scrofa (Pig).